The chain runs to 1377 residues: DNA-directed RNA polymerase subunit beta (1377 aa).

This sequence belongs to the RNA polymerase beta chain family. The RNAP catalytic core consists of 2 alpha, 1 beta, 1 beta' and 1 omega subunit. When a sigma factor is associated with the core the holoenzyme is formed, which can initiate transcription.

The enzyme catalyses RNA(n) + a ribonucleoside 5'-triphosphate = RNA(n+1) + diphosphate. In terms of biological role, DNA-dependent RNA polymerase catalyzes the transcription of DNA into RNA using the four ribonucleoside triphosphates as substrates. The chain is DNA-directed RNA polymerase subunit beta from Azoarcus sp. (strain BH72).